A 439-amino-acid polypeptide reads, in one-letter code: O-fucosyltransferase 13 (439 aa).

A helical; Signal-anchor for type II membrane protein membrane pass occupies residues 8 to 28 (PLFVFVLTFSLLLVVILLSPS). 2 N-linked (GlcNAc...) asparagine glycosylation sites follow: Asn-104 and Asn-119. 238-240 (HLR) serves as a coordination point for substrate. The N-linked (GlcNAc...) asparagine glycan is linked to Asn-293.

Belongs to the glycosyltransferase GT106 family.

The protein localises to the membrane. Its pathway is glycan metabolism. The polypeptide is O-fucosyltransferase 13 (Arabidopsis thaliana (Mouse-ear cress)).